The chain runs to 1023 residues: Sodium/potassium-transporting ATPase subunit alpha-1 (1023 aa).

Residues 1 to 5 (MGKGV) constitute a propeptide that is removed on maturation. Basic and acidic residues predominate over residues 1–11 (MGKGVGRDKYE). The segment at 1-39 (MGKGVGRDKYEPAAVSEQGDKKGKKGKKDRDMDELKKEV) is disordered. The Cytoplasmic segment spans residues 6-87 (GRDKYEPAAV…NALTPPPTTP (82 aa)). Lys9 is subject to N6-acetyllysine. Tyr10 is subject to Phosphotyrosine. Ser16 is modified (phosphoserine). At Lys21 the chain carries N6-acetyllysine. Positions 28-39 (KDRDMDELKKEV) are enriched in basic and acidic residues. 2 positions are modified to phosphoserine: Ser40 and Ser47. Positions 82-84 (PPP) are phosphoinositide-3 kinase binding. The chain crosses the membrane as a helical span at residues 88–108 (EWIKFCRQLFGGFSMLLWIGA). The Extracellular segment spans residues 109-131 (ILCFLAYSIQAATEEEPQNDNLY). A helical membrane pass occupies residues 132 to 152 (LGVVLSAVVIITGCFSYYQEA). The Cytoplasmic segment spans residues 153–288 (KSSKIMESFK…GGQTPIAAEI (136 aa)). The tract at residues 216–235 (SSLTGESEPQTRSPDFTNEN) is disordered. Ser228 bears the Phosphoserine mark. A Phosphotyrosine modification is found at Tyr260. The chain crosses the membrane as a helical span at residues 289–308 (EHFIHIITGVAVFLGVSFFI). At 309–320 (LSLILEYTWLEA) the chain is on the extracellular side. A helical membrane pass occupies residues 321 to 338 (VIFLIGIIVANVPEGLLA). At 339-772 (TVTVCLTLTA…EEGRLIFDNL (434 aa)) the chain is on the cytoplasmic side. Asp376 (4-aspartylphosphate intermediate) is an active-site residue. Phosphoserine occurs at positions 452 and 484. An ATP-binding site is contributed by Lys487. Tyr542 carries the phosphotyrosine modification. Residues 596-717 (RAAVPDAVGK…QGAIVAVTGD (122 aa)) are mediates interaction with SCN7A. Residue Lys661 is modified to N6-succinyllysine. Phosphoserine is present on residues Ser668 and Ser675. Mg(2+) is bound by residues Asp717 and Asp721. The helical transmembrane segment at 773-792 (KKSIAYTLTSNIPEITPFLI) threads the bilayer. At 793 to 802 (FIIANIPLPL) the chain is on the extracellular side. A helical transmembrane segment spans residues 803 to 823 (GTVTILCIDLGTDMVPAISLA). The Cytoplasmic segment spans residues 824 to 843 (YEQAESDIMKRQPRNPKTDK). The chain crosses the membrane as a helical span at residues 844–866 (LVNERLISMAYGQIGMIQALGGF). The Extracellular segment spans residues 867 to 918 (FTYFVILAENGFLPIHLLGLRVDWDDRWINDVEDSYGQQWTYEQRKIVEFTC). The helical transmembrane segment at 919–938 (HTAFFVSIVVVQWADLVICK) threads the bilayer. The Cytoplasmic segment spans residues 939–951 (TRRNSVFQQGMKN). A Phosphoserine; by PKA modification is found at Ser943. Residues 952–970 (KILIFGLFEETALAAFLSY) form a helical membrane-spanning segment. Topologically, residues 971–985 (CPGMGVALRMYPLKP) are extracellular. A helical transmembrane segment spans residues 986–1006 (TWWFCAFPYSLLIFVYDEVRK). Residues 1007–1023 (LIIRRRPGGWVEKETYY) are Cytoplasmic-facing.

The protein belongs to the cation transport ATPase (P-type) (TC 3.A.3) family. Type IIC subfamily. In terms of assembly, the sodium/potassium-transporting ATPase is composed of a catalytic alpha subunit, an auxiliary non-catalytic beta subunit and an additional regulatory subunit. Interacts with regulatory subunit FXYD1. Interacts with regulatory subunit FXYD3. Interacts with SIK1. Binds the HLA class II histocompatibility antigen DR1. Interacts with SLC35G1 and STIM1. Interacts with CLN3; this interaction regulates the sodium/potassium-transporting ATPase complex localization at the plasma membrane. Interacts with SCN7A; activates ATP1A1 P-type sodium:potassium-exchanging transporter activity which indirectly signals to nearby neurons to regulate sodium homeostasis. Post-translationally, phosphorylation on Tyr-10 modulates pumping activity. Phosphorylation of Ser-943 by PKA modulates the response of ATP1A1 to PKC. Dephosphorylation by protein phosphatase 2A (PP2A) following increases in intracellular sodium, leading to increase catalytic activity.

The protein resides in the cell membrane. It localises to the basolateral cell membrane. It is found in the sarcolemma. The protein localises to the cell projection. Its subcellular location is the axon. The protein resides in the melanosome. The enzyme catalyses K(+)(out) + Na(+)(in) + ATP + H2O = K(+)(in) + Na(+)(out) + ADP + phosphate + H(+). Functionally, this is the catalytic component of the active enzyme, which catalyzes the hydrolysis of ATP coupled with the exchange of sodium and potassium ions across the plasma membrane. This action creates the electrochemical gradient of sodium and potassium ions, providing the energy for active transport of various nutrients. Could also be part of an osmosensory signaling pathway that senses body-fluid sodium levels and controls salt intake behavior as well as voluntary water intake to regulate sodium homeostasis. In Homo sapiens (Human), this protein is Sodium/potassium-transporting ATPase subunit alpha-1 (ATP1A1).